The primary structure comprises 465 residues: Ribosomal protein uS12 methylthiotransferase RimO (465 aa).

Residues 1–117 (MKVGFISLGC…IVDICEGMPP (117 aa)) form the MTTase N-terminal domain. Positions 10, 46, 80, 150, 154, and 157 each coordinate [4Fe-4S] cluster. One can recognise a Radical SAM core domain in the interval 136–369 (ATPRHFAYMK…AIQRKIARAR (234 aa)). The TRAM domain occupies 371 to 442 (RGLVGKEVPV…DYDVVGTLLA (72 aa)).

It belongs to the methylthiotransferase family. RimO subfamily. [4Fe-4S] cluster serves as cofactor.

The protein localises to the cytoplasm. It catalyses the reaction L-aspartate(89)-[ribosomal protein uS12]-hydrogen + (sulfur carrier)-SH + AH2 + 2 S-adenosyl-L-methionine = 3-methylsulfanyl-L-aspartate(89)-[ribosomal protein uS12]-hydrogen + (sulfur carrier)-H + 5'-deoxyadenosine + L-methionine + A + S-adenosyl-L-homocysteine + 2 H(+). Its function is as follows. Catalyzes the methylthiolation of an aspartic acid residue of ribosomal protein uS12. The chain is Ribosomal protein uS12 methylthiotransferase RimO from Solibacter usitatus (strain Ellin6076).